The chain runs to 1322 residues: BRCA2-interacting transcriptional repressor EMSY (1322 aa).

Residues 1–478 (MPVVWPTLLD…LPKPVTATLP (478 aa)) form an interaction with BRCA2 region. The 85-residue stretch at 16-100 (CKRILRKLEL…EWSIEGRRLV (85 aa)) folds into the ENT domain. The tract at residues 104-108 (PRLVP) is interaction with ZMYND11. The segment covering 148-162 (STTSTPTSTPVPSGS) has biased composition (low complexity). Disordered regions lie at residues 148 to 178 (STTSTPTSTPVPSGSIATVKSPRPASPASNV) and 192 to 215 (VSCSDEDEKPRKRRRTNSSSSSPV). Threonine 207 bears the Phosphothreonine mark. Serine 209 and serine 213 each carry phosphoserine. O-linked (GlcNAc) serine glycans are attached at residues serine 228 and serine 236. Serine 238 bears the Phosphoserine mark. Threonine 271 carries an O-linked (GlcNAc) threonine glycan. The span at 417–437 (QQTQQQVAQPSPVSHQQQPQQ) shows a compositional bias: low complexity. Residues 417–444 (QQTQQQVAQPSPVSHQQQPQQSPLPPGI) are disordered. Residues threonine 501 and threonine 506 are each glycosylated (O-linked (GlcNAc) threonine). A glycan (O-linked (GlcNAc) serine) is linked at serine 557. Residues 698–707 (VAEAGNSSIQ) show a composition bias toward polar residues. The segment at 698-736 (VAEAGNSSIQEGKEEPQNYTDSSSSSTESSQSSQDSQPV) is disordered. Residues 717–734 (TDSSSSSTESSQSSQDSQ) show a composition bias toward low complexity. Residues serine 818 and serine 821 each carry the phosphoserine modification. An O-linked (GlcNAc) threonine glycan is attached at threonine 1120. A Phosphoserine modification is found at serine 1136. Residues 1205–1223 (QKCRESCSSPSTVGSSLTT) are compositionally biased toward polar residues. Disordered stretches follow at residues 1205–1231 (QKCRESCSSPSTVGSSLTTRKIDPPAV) and 1290–1322 (QLDDEETAMEQDIDSSTEDGTEPSPSQSSAERS). The span at 1291–1310 (LDDEETAMEQDIDSSTEDGT) shows a compositional bias: acidic residues. The span at 1312-1322 (PSPSQSSAERS) shows a compositional bias: polar residues.

Homodimer. Interacts with the transactivation domain of BRCA2. Interacts with CBX1 (via chromoshadow domain). Interacts with ZMYND11. Does not interact with CBX3 or CBX5. Component of a nuclear receptor-mediated transcription complex composed of at least ZNF335, CCAR2 and EMSY; the complex stimulates the transcription of nuclear receptor target genes such as SOX9 and HOXA1. Within the complex interacts with CCAR2 and ZNF335. Components of this complex may associate with components of a histone methylation complex to form a complex at least composed of ZNF335, HCFC1, CCAR2, EMSY, MKI67, RBBP5, ASH2L and WDR5. Within this complex, interacts with ASH2L and RBBP5. In terms of processing, O-glycosylated during cytokinesis at sites identical or close to phosphorylation sites, this interferes with the phosphorylation status.

It localises to the nucleus. Regulator which is able to repress transcription, possibly via its interaction with a multiprotein chromatin remodeling complex that modifies the chromatin. Its interaction with BRCA2 suggests that it may play a central role in the DNA repair function of BRCA2. Mediates ligand-dependent transcriptional activation by nuclear hormone receptors. This chain is BRCA2-interacting transcriptional repressor EMSY, found in Homo sapiens (Human).